Consider the following 320-residue polypeptide: 2-oxoglutarate-dependent dioxygenase thnC (320 aa).

A Fe2OG dioxygenase domain is found at 174–278 (PLVQMKLIRY…HSCATFWHGD (105 aa)). Fe cation is bound by residues His-199, Asp-201, and His-258. Arg-268 provides a ligand contact to 2-oxoglutarate.

Belongs to the iron/ascorbate-dependent oxidoreductase family. It depends on Fe(2+) as a cofactor.

It carries out the reaction trihazone A + 2-oxoglutarate + O2 + H(+) = trihazone D + succinate + 2 CO2 + H2O. It functions in the pathway secondary metabolite biosynthesis. In terms of biological role, 2-oxoglutarate-dependent dioxygenase; part of the gene cluster that produces the tetronate natural products trihazones. ThnC catalyzes the oxidative decarboxylation of trihazone A to trihazone D. The C4 hydrogen is first abstracted by the iron-oxo species generated in ThnC to give a tertiary radical at C4. This is followed by decarboxylation and removal of the second electron by the FeIII-OH center to give trihazone D. The pathway begins with the formation of trihazone A by the hybrid PKS-NRPS synthetase thnA and the trans-enoyl reductase thnE. Trihazone A is further decarboxylated by the 2-oxoglutarate-dependent dioxygenase thnC to produce trihazone D. The function of the FAD-dependent monooxygenase thnD has still to be identified. This chain is 2-oxoglutarate-dependent dioxygenase thnC, found in Trichoderma harzianum (Hypocrea lixii).